We begin with the raw amino-acid sequence, 317 residues long: Probable cell division protein WhiA (317 aa).

The H-T-H motif DNA-binding region spans 275 to 308 (SLKELGEMLVPKVGKSGVNHRMRKIDELAEKLEE).

This sequence belongs to the WhiA family.

Its function is as follows. Involved in cell division and chromosome segregation. The protein is Probable cell division protein WhiA of Desulfitobacterium hafniense (strain Y51).